We begin with the raw amino-acid sequence, 94 residues long: Small ribosomal subunit protein bS18c (94 aa).

The protein belongs to the bacterial ribosomal protein bS18 family. In terms of assembly, part of the 30S ribosomal subunit.

It is found in the plastid. The protein resides in the chloroplast. In Manihot esculenta (Cassava), this protein is Small ribosomal subunit protein bS18c.